Reading from the N-terminus, the 854-residue chain is Putative Tricorn-like protease C-terminal subunit (854 aa).

The active-site Charge relay system is His-539. Residues 554–646 are PDZ-like; it reads PIGGLGADYE…RVTVKLLKDE (93 aa). Gly-709 provides a ligand contact to substrate. The Nucleophile role is filled by Ser-756. Glu-814 functions as the Charge relay system in the catalytic mechanism.

The protein belongs to the peptidase S41B family.

It localises to the cytoplasm. In terms of biological role, degrades oligopeptides in a sequential manner. In Sulfurisphaera tokodaii (strain DSM 16993 / JCM 10545 / NBRC 100140 / 7) (Sulfolobus tokodaii), this protein is Putative Tricorn-like protease C-terminal subunit (triC).